Consider the following 422-residue polypeptide: Cytochrome P450-pinF1, plant-inducible (422 aa).

Residue cysteine 369 coordinates heme.

Belongs to the cytochrome P450 family. Heme is required as a cofactor.

Its function is as follows. Not essential for virulence, but may be involved in the detoxification of plant protective agents at the site of wounding. The sequence is that of Cytochrome P450-pinF1, plant-inducible (cyp103) from Rhizobium radiobacter (Agrobacterium tumefaciens).